The primary structure comprises 468 residues: Pancreatic lipase-related protein 2 (468 aa).

Positions 1 to 16 are cleaved as a signal peptide; it reads MLLCWIVSLLLATVGG. Cys-20 and Cys-26 are joined by a disulfide. Positions 92–104 are required for galactolipase activity; that stretch reads VHGFIDKGEDGWL. Cys-108 and Cys-119 are oxidised to a cystine. Ser-170 serves as the catalytic Nucleophile. Asp-194 (charge relay system) is an active-site residue. Residues Glu-205, Arg-208, Asp-210, and Asp-213 each coordinate Ca(2+). Cys-255 and Cys-279 are joined by a disulfide. Residues 256–278 form a required for galactolipase activity region; the sequence is QKNILSTIVDINGIWEGTQNFVA. The active-site Charge relay system is His-281. 2 cysteine pairs are disulfide-bonded: Cys-303/Cys-314 and Cys-317/Cys-322. 2 N-linked (GlcNAc...) asparagine glycosylation sites follow: Asn-352 and Asn-427. The PLAT domain occupies 356–468; sequence WRYKVSVTLS…EDVLQSLYPC (113 aa). Cys-452 and Cys-468 form a disulfide bridge.

The protein belongs to the AB hydrolase superfamily. Lipase family. As to expression, expressed in pancreatic acinar cells (at protein level).

It is found in the secreted. The protein resides in the zymogen granule membrane. The protein localises to the cell projection. Its subcellular location is the neuron projection. It carries out the reaction a triacylglycerol + H2O = a diacylglycerol + a fatty acid + H(+). It catalyses the reaction a 1,2-diacyl-3-O-(beta-D-galactosyl)-sn-glycerol + 2 H2O = 3-beta-D-galactosyl-sn-glycerol + 2 a fatty acid + 2 H(+). The catalysed reaction is 1,2,3-tri-(9Z-octadecenoyl)-glycerol + H2O = di-(9Z)-octadecenoylglycerol + (9Z)-octadecenoate + H(+). The enzyme catalyses di-(9Z)-octadecenoylglycerol + H2O = (9Z-octadecenoyl)-glycerol + (9Z)-octadecenoate + H(+). It carries out the reaction (9Z-octadecenoyl)-glycerol + H2O = glycerol + (9Z)-octadecenoate + H(+). It catalyses the reaction 1-(9Z-octadecenoyl)-glycerol + H2O = glycerol + (9Z)-octadecenoate + H(+). The catalysed reaction is 1,2,3-tripropanoylglycerol + H2O = dipropanoylglycerol + propanoate + H(+). The enzyme catalyses 1,2,3-tributanoylglycerol + H2O = dibutanoylglycerol + butanoate + H(+). It carries out the reaction 1,2,3-trioctanoylglycerol + H2O = dioctanoylglycerol + octanoate + H(+). It catalyses the reaction 1,2-didecanoylglycerol + H2O = decanoylglycerol + decanoate + H(+). The catalysed reaction is long chain 1,2-diacyl-3-O-beta-D-galactosyl-sn-glycerol + H2O = long chain acyl-3-O-beta-D-galactosyl-sn-glycerol + a fatty acid + H(+). The enzyme catalyses 1,2-dioctanoyl-3-O-beta-D-galactosyl-sn-glycerol + H2O = octanoyl-3-(beta-D-galactosyl)-sn-glycerol + octanoate + H(+). It carries out the reaction 1,2-didodecanoyl-3-beta-D-galactosyl-sn-glycerol + H2O = dodecanoyl-3-beta-D-galactosyl-sn-glycerol + dodecanoate + H(+). It catalyses the reaction 1-beta-D-galactosyl-2,3-didodecanoyl-sn-glycerol + H2O = 1-beta-D-galactosyl-dodecanoyl-sn-glycerol + dodecanoate + H(+). The catalysed reaction is a 1,2-diacyl-3-O-[alpha-D-galactosyl-(1-&gt;6)-beta-D-galactosyl]-sn-glycerol + H2O = acyl-3-O-[alpha-D-galactosyl-(1-&gt;6)-beta-D-galactosyl]-sn-glycerol + a fatty acid + H(+). The enzyme catalyses long chain 1,2-diacyl-3-O-[alpha-D-galactosyl-(1-&gt;6)-beta-D-galactosyl]-sn-glycerol + H2O = long chain acyl-3-O-[alpha-D-galactosyl-(1-&gt;6)-beta-D-galactosyl]-sn-glycerol + a fatty acid + H(+). It carries out the reaction 1,2-dioctanoyl-3-O-[alpha-D-galactosyl-(1-&gt;6)-beta-D-galactosyl]-sn-glycerol + H2O = octanoyl-3-O-[alpha-D-galactosyl-(1-&gt;6)-beta-D-galactosyl]-sn-glycerol + octanoate + H(+). It catalyses the reaction 1,2-didodecanoyl-3-O-[alpha-D-galactosyl-(1-&gt;6)-beta-D-galactosyl]-sn-glycerol + H2O = dodecanoyl-3-O-[alpha-D-galactosyl-(1-&gt;6)-beta-D-galactosyl]-sn-glycerol + dodecanoate + H(+). The catalysed reaction is a 1,2-diacyl-sn-glycero-3-phosphocholine + H2O = a monoacyl-sn-glycero-3-phosphocholine + a fatty acid + H(+). The protein operates within glycerolipid metabolism; triacylglycerol degradation. It functions in the pathway glycolipid metabolism. CLPS stimulates triacylglycerol lipase activity. Triacylglycerol lipase activity is not inhibited by increasing bile salt concentration. Functionally, lipase that primarily hydrolyzes triglycerides and galactosylglycerides. In neonates, may play a major role in pancreatic digestion of dietary fats such as milk fat globules enriched in long-chain triglycerides. Hydrolyzes short-, medium- and long-chain fatty acyls in triglycerides without apparent positional specificity. Can completely deacylate triacylglycerols. When the liver matures and bile salt synthesis increases, likely functions mainly as a galactolipase and monoacylglycerol lipase. Hydrolyzes monogalactosyldiglycerols (MGDG) and digalactosyldiacylglycerols (DGDG) present in a plant-based diet, releasing long-chain polyunsaturated fatty acids. Hydrolyzes medium- and long-chain fatty acyls in galactolipids. May act together with LIPF to hydrolyze partially digested triglycerides. Hydrolyzes long-chain monoglycerides with high efficiency. In cytotoxic T cells, contributes to perforin-dependent cell lysis, but is unlikely to mediate direct cytotoxicity. Also has low phospholipase activity. In neurons, required for the localization of the phospholipid 1-oleoyl-2-palmitoyl-PC (OPPC) to neurite tips through acyl chain remodeling of membrane phospholipids. The resulting OPPC-rich lipid membrane domain recruits the t-SNARE protein STX4 by selectively interacting with the STX4 transmembrane domain and this promotes surface expression of the dopamine transporter SLC6A3/DAT at neurite tips by facilitating fusion of SLC6A3-containing transport vesicles with the plasma membrane. In Rattus norvegicus (Rat), this protein is Pancreatic lipase-related protein 2.